We begin with the raw amino-acid sequence, 135 residues long: MKVLLVLTDAYSDCEKAITYAVNFSEKLGAELDILAVLEDVYNLERANVTFGLPFPPEIKEESKKRIERRLREVWEKLTGSTEIPGVEYRIGPLSEEVKKFVEGKGYELVVWACYPSAYLCKVIDGLNLASLIVK.

This sequence belongs to the universal stress protein A family.

This chain is Universal stress protein Aq_178, found in Aquifex aeolicus (strain VF5).